Consider the following 351-residue polypeptide: Glycerol-1-phosphate dehydrogenase [NAD(P)+] (351 aa).

Residues 97–101 and 119–122 each bind NAD(+); these read GKVID and TSPS. Asp124 contacts substrate. Ser128 provides a ligand contact to NAD(+). Residue Asp171 coordinates substrate. Residues Asp171 and His251 each contribute to the Zn(2+) site. A substrate-binding site is contributed by His255. Zn(2+) is bound at residue His267.

The protein belongs to the glycerol-1-phosphate dehydrogenase family. As to quaternary structure, homodimer. It depends on Zn(2+) as a cofactor.

It is found in the cytoplasm. It catalyses the reaction sn-glycerol 1-phosphate + NAD(+) = dihydroxyacetone phosphate + NADH + H(+). It carries out the reaction sn-glycerol 1-phosphate + NADP(+) = dihydroxyacetone phosphate + NADPH + H(+). The protein operates within membrane lipid metabolism; glycerophospholipid metabolism. Catalyzes the NAD(P)H-dependent reduction of dihydroxyacetonephosphate (DHAP or glycerone phosphate) to glycerol 1-phosphate (G1P). The G1P thus generated is used as the glycerophosphate backbone of phospholipids in the cellular membranes of Archaea. The chain is Glycerol-1-phosphate dehydrogenase [NAD(P)+] from Saccharolobus islandicus (strain L.S.2.15 / Lassen #1) (Sulfolobus islandicus).